The primary structure comprises 295 residues: Bifunctional protein FolD (295 aa).

Residues 166-168 (GRS), threonine 195, and valine 236 contribute to the NADP(+) site.

This sequence belongs to the tetrahydrofolate dehydrogenase/cyclohydrolase family. In terms of assembly, homodimer.

The enzyme catalyses (6R)-5,10-methylene-5,6,7,8-tetrahydrofolate + NADP(+) = (6R)-5,10-methenyltetrahydrofolate + NADPH. It catalyses the reaction (6R)-5,10-methenyltetrahydrofolate + H2O = (6R)-10-formyltetrahydrofolate + H(+). It functions in the pathway one-carbon metabolism; tetrahydrofolate interconversion. Its function is as follows. Catalyzes the oxidation of 5,10-methylenetetrahydrofolate to 5,10-methenyltetrahydrofolate and then the hydrolysis of 5,10-methenyltetrahydrofolate to 10-formyltetrahydrofolate. This is Bifunctional protein FolD from Syntrophobacter fumaroxidans (strain DSM 10017 / MPOB).